We begin with the raw amino-acid sequence, 71 residues long: Small ribosomal subunit protein bS21 (71 aa).

It belongs to the bacterial ribosomal protein bS21 family.

The polypeptide is Small ribosomal subunit protein bS21 (Baumannia cicadellinicola subsp. Homalodisca coagulata).